Reading from the N-terminus, the 2181-residue chain is Non-reducing polyketide synthase dpmaA (2181 aa).

Residues 74–180 (QWVKGNSTQP…LALCCGAYID (107 aa)) form an N-terminal acylcarrier protein transacylase domain (SAT) region. The Ketosynthase family 3 (KS3) domain maps to 347–779 (QAQLLVLGPV…GTNAAMLVCQ (433 aa)). Active-site for beta-ketoacyl synthase activity residues include cysteine 525, histidine 661, and histidine 702. The malonyl-CoA:ACP transacylase (MAT) domain stretch occupies residues 891-1193 (VLAGQTGRRV…SFYPAALGEP (303 aa)). Serine 977 serves as the catalytic For acyl/malonyl transferase activity. An N-terminal hotdog fold region spans residues 1269 to 1401 (VSLIGKTQNA…GVITLQEVYS (133 aa)). In terms of domain architecture, PKS/mFAS DH spans 1269–1579 (VSLIGKTQNA…FQKIAISSLK (311 aa)). The tract at residues 1276–1573 (QNAGVQTVEY…TILGAKFQKI (298 aa)) is product template (PT) domain. The interval 1425–1579 (SASVVQGDFI…FQKIAISSLK (155 aa)) is C-terminal hotdog fold. Positions 1587-1603 (GVPQTSGGRTPSSSITE) are enriched in polar residues. 2 disordered regions span residues 1587–1618 (GVPQTSGGRTPSSSITEFISGDDASPCPPIPG) and 1652–1675 (ISGSSRSTSSSPPSLESRSQAMET). The segment covering 1653 to 1670 (SGSSRSTSSSPPSLESRS) has biased composition (low complexity). Residues 1677 to 1753 (EITEGAGSAL…TLFHTIFPQQ (77 aa)) enclose the Carrier domain. Position 1713 is an O-(pantetheine 4'-phosphoryl)serine (serine 1713). The segment at 1982–2164 (EFMNCLFSYN…QSGFDHIDWT (183 aa)) is methyltransferase (CMeT) domain.

The protein operates within secondary metabolite biosynthesis; terpenoid biosynthesis. Non-reducing polyketide synthase; part of the gene cluster that mediates the biosynthesis of the diterpenoid pyrones subglutinols A and B. The first step of the pathway is the synthesis of the alpha-pyrone moiety by the polyketide synthase dpmaA via condensation of one acetyl-CoA starter unit with 3 malonyl-CoA units and 2 methylations. The alpha-pyrone is then combined with geranylgeranyl pyrophosphate (GGPP) formed by the GGPP synthase dpmaD through the action of the prenyltransferase dpmaC to yield a linear alpha-pyrone diterpenoid. Subsequent steps in the diterpenoid pyrone biosynthetic pathway involve the decalin core formation, which is initiated by the epoxidation of the C10-C11 olefin by the FAD-dependent oxidoreductase dpmaE, and is followed by a cyclization cascade catalyzed by the terpene cyclase dpmaB. The dehydrogenase dpmaF is then involved in tetrahydrofuran (THF) ring formation at the C5 unit to complete the formation of subglutinols A and B. The protein is Non-reducing polyketide synthase dpmaA of Metarhizium anisopliae (Entomophthora anisopliae).